We begin with the raw amino-acid sequence, 549 residues long: Vacuolar fusion protein MON1 homolog A (549 aa).

Disordered stretches follow at residues 1-90 (MAAD…EQIS) and 109-137 (EEMRQSQEGKLEPSPQATRHDSVLSGKEE). Positions 110–119 (EMRQSQEGKL) are enriched in basic and acidic residues.

This sequence belongs to the MON1/SAND family.

Its function is as follows. Plays an important role in membrane trafficking through the secretory apparatus. Not involved in endocytic trafficking to lysosomes. The chain is Vacuolar fusion protein MON1 homolog A (MON1A) from Gallus gallus (Chicken).